A 380-amino-acid chain; its full sequence is Protein GOLM2 (380 aa).

An N-acetylmethionine modification is found at methionine 1. At 1-14 the chain is on the cytoplasmic side; sequence MVGFGANRRAGRLP. A helical; Signal-anchor for type II membrane protein transmembrane segment spans residues 15–35; that stretch reads SLVLAVLLVVIAVLAFNYWSI. Positions 35–195 form a coiled coil; sequence ISSRHVLLQE…QFLQEQKQEA (161 aa). At 36-380 the chain is on the lumenal side; it reads SSRHVLLQEE…YGKQRFNDAL (345 aa). Composition is skewed to basic and acidic residues over residues 192–212 and 227–247; these read KQEAHKFESKGGNELDTDNHA and KNEEPSSHHIPHGKEQIKRGG. Residues 192–254 form a disordered region; it reads KQEAHKFESK…RGGDAGMPGI (63 aa). 2 positions are modified to phosphoserine: serine 233 and serine 275. Positions 280–380 are disordered; it reads ESHQVISHLP…YGKQRFNDAL (101 aa). Positions 305–321 are enriched in polar residues; the sequence is NHNGNSRTSKQNPSNPL. The segment covering 344 to 380 has biased composition (basic and acidic residues); sequence ATKDRAGDFHKLKQNDEERELQMDPADYGKQRFNDAL.

The protein belongs to the GOLM family.

It localises to the membrane. The chain is Protein GOLM2 (GOLM2) from Bos taurus (Bovine).